The chain runs to 152 residues: MQLTELIETTVTGLGYELVELERTGRGMLCIYIDQPAGISLDDCEKVTRQLQHVLTVENIDYERLEVSSPGLDRPLKKLADFERFAGSEVSVTLKKPLDGRKTYRGILHAPNGETIGLEFEGKKGEAAMLDFTLADIDKARLIPQVDFRSRK.

It belongs to the RimP family.

It localises to the cytoplasm. Functionally, required for maturation of 30S ribosomal subunits. The polypeptide is Ribosome maturation factor RimP (Burkholderia cenocepacia (strain ATCC BAA-245 / DSM 16553 / LMG 16656 / NCTC 13227 / J2315 / CF5610) (Burkholderia cepacia (strain J2315))).